The sequence spans 186 residues: MLALISRLLDWFRSLFWKEEMELTLVGLQYSGKTTFVNVIASGQFSEDMIPTVGFNMRKVTKGNVTIKIWDIGGQPRFQSMWERYCRGVNAIVYMIDAADREKIEASRNELHNLLDKPQLQGIPVLVLGNKRDLPNALDEKQLIEKMNLSAIQDREICCYSISCKEKDNIDITLQWLIQHSKSRRS.

An intramembrane region (note=Mediates targeting to membranes) is located at residues 1-19 (MLALISRLLDWFRSLFWKE). Residues 29 to 35 (QYSGKTT), 71 to 75 (DIGGQ), and 130 to 133 (NKRD) contribute to the GTP site. Residue lysine 141 forms a Glycyl lysine isopeptide (Lys-Gly) (interchain with G-Cter in ubiquitin) linkage.

It belongs to the small GTPase superfamily. Arf family. As to quaternary structure, interacts with tubulin. Interacts with BORCS5; recruits ARL8B to lysosomes. Interacts with VPS41; the interaction mediates the recruitment of the HOPS complex to lysosomes. Interacts (GTP-bound form) with PLEKHM2 (via RUN domain); the interaction is required to recruit the motor protein kinesin-1 on lysosomes. Interacts (GTP-bound form) with PLEKHM1 (via RUN domain); the interaction is required for PLEKHM1 localization to lysosomes and for ARL8B function in delivery and degradation of endocytic and autophagic cargo in lysosomes. PLEKHM1 and PLEKHM2 compete for interaction with ARL8B. Interacts (GTP-bound form) with RUFY1; the interaction is required for RUFY1 endosomal location. When GTP-bound, interacts with RUFY3 and RUFY4, but not with RUFY1, nor RUFY2. In terms of processing, ubiquitinated at Lys-141 by RNF167, leading to its degradation.

Its subcellular location is the late endosome membrane. The protein localises to the lysosome membrane. It is found in the cytoplasm. It localises to the cytoskeleton. The protein resides in the spindle. Its subcellular location is the cell projection. The protein localises to the axon. It is found in the synapse. It localises to the cytolytic granule membrane. The protein resides in the early endosome membrane. The enzyme catalyses GTP + H2O = GDP + phosphate + H(+). Functionally, small GTPase which cycles between active GTP-bound and inactive GDP-bound states. In its active state, binds to a variety of effector proteins playing a key role in the regulation of lysosomal positioning which is important for nutrient sensing, natural killer cell-mediated cytotoxicity and antigen presentation. Along with its effectors, orchestrates lysosomal transport and fusion. Localizes specifically to lysosomal membranes and mediates anterograde lysosomal motility by recruiting PLEKHM2, which in turn recruits the motor protein kinesin-1 on lysosomes. Required for lysosomal and cytolytic granule exocytosis. Critical factor involved in NK cell-mediated cytotoxicity. Drives the polarization of cytolytic granules and microtubule-organizing centers (MTOCs) toward the immune synapse between effector NK lymphocytes and target cells. In neurons, mediates the anterograde axonal long-range transport of presynaptic lysosome-related vesicles required for presynaptic biogenesis and synaptic function. Also acts as a regulator of endosome to lysosome trafficking pathways of special significance for host defense. Recruits RUFY1 onto early endosomes regulating endosomes to trans-Golgi network proteins retrieval. Regulates cargo trafficking to lysosomes by binding to PLEKHM1 and recruiting the HOPS subunit VPS41, resulting in functional assembly of the HOPS complex on lysosomal membranes. Plays an important role in cargo delivery to lysosomes for antigen presentation and microbial killing. Directs the intersection of CD1d with lipid antigens in lysosomes, and plays a role in intersecting phagosomes with lysosomes to generate phagolysosomes that kill microbes. Involved in the process of MHC II presentation. Regulates the delivery of antigens to lysosomes and the formation of MHC II-peptide complexes through the recruitment of the HOPS complex to lysosomes allowing the fusion of late endosomes to lysosomes. May play a role in chromosome segregation. This chain is ADP-ribosylation factor-like protein 8B (ARL8B), found in Bos taurus (Bovine).